The following is a 281-amino-acid chain: 4-diphosphocytidyl-2-C-methyl-D-erythritol kinase (281 aa).

Active-site residues include K11 and D138.

It belongs to the GHMP kinase family. IspE subfamily.

The catalysed reaction is 4-CDP-2-C-methyl-D-erythritol + ATP = 4-CDP-2-C-methyl-D-erythritol 2-phosphate + ADP + H(+). It participates in isoprenoid biosynthesis; isopentenyl diphosphate biosynthesis via DXP pathway; isopentenyl diphosphate from 1-deoxy-D-xylulose 5-phosphate: step 3/6. Its function is as follows. Catalyzes the phosphorylation of the position 2 hydroxy group of 4-diphosphocytidyl-2C-methyl-D-erythritol. The chain is 4-diphosphocytidyl-2-C-methyl-D-erythritol kinase from Pelagibacter ubique (strain HTCC1062).